Consider the following 89-residue polypeptide: Large ribosomal subunit protein bL27 (89 aa).

Positions 1-22 (MAHKKGTGSTRNGRDSNAQRLG) are disordered. Residues 7-19 (TGSTRNGRDSNAQ) are compositionally biased toward polar residues.

It belongs to the bacterial ribosomal protein bL27 family.

The protein is Large ribosomal subunit protein bL27 of Cyanothece sp. (strain PCC 7425 / ATCC 29141).